Reading from the N-terminus, the 569-residue chain is MSSNGWLQIGLLLALVFLTIKPLGLYIACVFEGQRTFLSPILGPLERLLLRISGVDARREQGWLAYTLAMLAFNAAGFLALYGILRLQAYLPYNPQGFAGMTPDLAFNTAISFVTNTNWQAYSGEQSASHFSQMAGLAVQNFLSAATGIAIALAVTRAFARSAANTLGNFWVDMTRSTLYLLLPMSIVLALVFVWMGIPQTLDASVTATTLDGAQQTIALGPIASQEAIKQLGTNGGGFFNANAAHPFENPSAISDYFNILAMMSITMALIYAFGKMVGDLRQGWALIASVAVLLIAGIAAVYIAETAGNPIHLALGLDPSFGNMEGKEVRFGQAMSAAYTAITTGISNGGVNTMHGSLTPLGGLVPLFLIQLGEILPGGVGSGLYGLIVFCVLTVFVAGLMVGRTPEFLGKKIEAREMKFAMLAVLVLPFAILGFSAIAAVLPNALASLGNAGPHGLSEILYAYTSAAGNNGSAFAGLSANTAWYNTTLGISMALGRFAYAVPVLAIAGSLAAKTKGTASAGTFPTHTPLFVGLLVAIIIILGGLQYFPALALGPIAEHVGMLAGTLY.

The next 10 helical transmembrane spans lie at 11-31 (LLLA…ACVF), 64-84 (LAYT…LYGI), 135-155 (AGLA…ALAV), 179-199 (LYLL…MGIP), 258-278 (FNIL…GKMV), 285-305 (WALI…VYIA), 384-404 (GLYG…LMVG), 423-443 (MLAV…AAVL), 490-510 (LGIS…AIAG), and 531-551 (LFVG…YFPA).

This sequence belongs to the KdpA family. The system is composed of three essential subunits: KdpA, KdpB and KdpC.

It is found in the cell inner membrane. Functionally, part of the high-affinity ATP-driven potassium transport (or Kdp) system, which catalyzes the hydrolysis of ATP coupled with the electrogenic transport of potassium into the cytoplasm. This subunit binds the periplasmic potassium ions and delivers the ions to the membrane domain of KdpB through an intramembrane tunnel. This chain is Potassium-transporting ATPase potassium-binding subunit, found in Allorhizobium ampelinum (strain ATCC BAA-846 / DSM 112012 / S4) (Agrobacterium vitis (strain S4)).